We begin with the raw amino-acid sequence, 306 residues long: Homeobox protein CUP9 (306 aa).

A disordered region spans residues 75-123 (PAINSGGTSTTATPTASTVETSKTSSSAMDTQSQYGSSKKSKSASDDAK). Residues 79 to 96 (SGGTSTTATPTASTVETS) are compositionally biased toward low complexity. Positions 97 to 110 (KTSSSAMDTQSQYG) are enriched in polar residues. The segment at residues 162 to 224 (NSGRRSNLPK…NVRRRKIFSD (63 aa)) is a DNA-binding region (homeobox; TALE-type).

Belongs to the TALE/CUP9 homeobox family.

It localises to the nucleus. In terms of biological role, probable DNA-binding protein which plays a role in protecting yeast cells against copper toxicity. May regulate the expression of important copper homeostatic genes. The sequence is that of Homeobox protein CUP9 (CUP9) from Saccharomyces cerevisiae (strain ATCC 204508 / S288c) (Baker's yeast).